We begin with the raw amino-acid sequence, 158 residues long: Endoribonuclease YbeY (158 aa).

Residues His-119, His-123, and His-129 each contribute to the Zn(2+) site.

The protein belongs to the endoribonuclease YbeY family. Zn(2+) serves as cofactor.

The protein localises to the cytoplasm. Functionally, single strand-specific metallo-endoribonuclease involved in late-stage 70S ribosome quality control and in maturation of the 3' terminus of the 16S rRNA. The sequence is that of Endoribonuclease YbeY from Acinetobacter baumannii (strain AB307-0294).